An 821-amino-acid chain; its full sequence is DNA gyrase subunit A (821 aa).

The Topo IIA-type catalytic domain maps to 35–500 (LPDVRDGLKP…GLETIEDEDL (466 aa)). Residue Y123 is the O-(5'-phospho-DNA)-tyrosine intermediate of the active site. A GyrA-box motif is present at residues 527 to 533 (QKRGGKG).

The protein belongs to the type II topoisomerase GyrA/ParC subunit family. Heterotetramer, composed of two GyrA and two GyrB chains. In the heterotetramer, GyrA contains the active site tyrosine that forms a transient covalent intermediate with DNA, while GyrB binds cofactors and catalyzes ATP hydrolysis.

Its subcellular location is the cytoplasm. The catalysed reaction is ATP-dependent breakage, passage and rejoining of double-stranded DNA.. A type II topoisomerase that negatively supercoils closed circular double-stranded (ds) DNA in an ATP-dependent manner to modulate DNA topology and maintain chromosomes in an underwound state. Negative supercoiling favors strand separation, and DNA replication, transcription, recombination and repair, all of which involve strand separation. Also able to catalyze the interconversion of other topological isomers of dsDNA rings, including catenanes and knotted rings. Type II topoisomerases break and join 2 DNA strands simultaneously in an ATP-dependent manner. The protein is DNA gyrase subunit A of Bacillus subtilis (strain 168).